A 269-amino-acid chain; its full sequence is Shikimate dehydrogenase (NADP(+)) (269 aa).

Shikimate contacts are provided by residues 14 to 16 (SLS) and Thr-61. The active-site Proton acceptor is the Lys-65. Glu-76 is an NADP(+) binding site. 2 residues coordinate shikimate: Asn-85 and Asp-99. Residues 123–127 (GAGGA), 146–151 (NRTPER), and Ile-209 each bind NADP(+). Tyr-211 serves as a coordination point for shikimate. Gly-231 contributes to the NADP(+) binding site.

The protein belongs to the shikimate dehydrogenase family. As to quaternary structure, homodimer.

It catalyses the reaction shikimate + NADP(+) = 3-dehydroshikimate + NADPH + H(+). It participates in metabolic intermediate biosynthesis; chorismate biosynthesis; chorismate from D-erythrose 4-phosphate and phosphoenolpyruvate: step 4/7. Involved in the biosynthesis of the chorismate, which leads to the biosynthesis of aromatic amino acids. Catalyzes the reversible NADPH linked reduction of 3-dehydroshikimate (DHSA) to yield shikimate (SA). The polypeptide is Shikimate dehydrogenase (NADP(+)) (Methanothrix thermoacetophila (strain DSM 6194 / JCM 14653 / NBRC 101360 / PT) (Methanosaeta thermophila)).